A 741-amino-acid polypeptide reads, in one-letter code: Pentatricopeptide repeat-containing protein At3g58590 (741 aa).

PPR repeat units follow at residues 48 to 78 (PVYVCNNIISLYEKLGEVSLAGKVFDQMPER), 79 to 113 (NKVSFNTIIKGYSKYGDVDKAWGVFSEMRYFGYLP), 114 to 146 (NQSTVSGLLSCASLDVRAGTQLHGLSLKYGLFM), 148 to 178 (DAFVGTCLLCLYGRLDLLEMAEQVFEDMPFK), 179 to 213 (SLETWNHMMSLLGHRGFLKECMFFFRELVRMGASL), 214 to 248 (TESSFLGVLKGVSCVKDLDISKQLHCSATKKGLDC), 249 to 279 (EISVVNSLISAYGKCGNTHMAERMFQDAGSW), 280 to 314 (DIVSWNAIICATAKSENPLKALKLFVSMPEHGFSP), 315 to 349 (NQGTYVSVLGVSSLVQLLSCGRQIHGMLIKNGCET), 350 to 380 (GIVLGNALIDFYAKCGNLEDSRLCFDYIRDK), 381 to 414 (NIVCWNALLSGYANKDGPICLSLFLQMLQMGFRP), 415 to 445 (TEYTFSTALKSCCVTELQQLHSVIVRMGYED), 446 to 481 (NDYVLSSLMRSYAKNQLMNDALLLLDWASGPTSVVP), 483 to 508 (NIVAGIYSRRGQYHESVKLISTLEQP), 509 to 543 (DTVSWNIAIAACSRSDYHEEVIELFKHMLQSNIRP), 544 to 578 (DKYTFVSILSLCSKLCDLTLGSSIHGLITKTDFSC), 580 to 610 (DTFVCNVLIDMYGKCGSIRSVMKVFEETREK), 611 to 645 (NLITWTALISCLGIHGYGQEALEKFKETLSLGFKP), 646 to 680 (DRVSFISILTACRHGGMVKEGMGLFQKMKDYGVEP), and 681 to 715 (EMDHYRCAVDLLARNGYLKEAEHLIREMPFPADAP).

The protein belongs to the PPR family. P subfamily.

The protein is Pentatricopeptide repeat-containing protein At3g58590 of Arabidopsis thaliana (Mouse-ear cress).